We begin with the raw amino-acid sequence, 775 residues long: Beta-galactosidase 7 (775 aa).

The first 17 residues, M1–A17, serve as a signal peptide directing secretion. The active-site Proton donor is the E185. The active-site Nucleophile is E256. N-linked (GlcNAc...) asparagine glycosylation is found at N257, N266, N277, N358, and N602. One can recognise an SUEL-type lectin domain in the interval R689–R775.

This sequence belongs to the glycosyl hydrolase 35 family.

Its subcellular location is the secreted. It localises to the extracellular space. The protein localises to the apoplast. It carries out the reaction Hydrolysis of terminal non-reducing beta-D-galactose residues in beta-D-galactosides.. The chain is Beta-galactosidase 7 from Oryza sativa subsp. japonica (Rice).